We begin with the raw amino-acid sequence, 177 residues long: MTTIVSVRRNGQVVIGGDGQVSLGNTVMKGNARKVHRLYNGKVLAGFAGGTADAFTLLERFEAKLQAHQGNLERAAVALAKDWRTDRALRRLEALLAVADEHKSFIITGNGDVVQPEQDLIAIGSGGNFAQSAAIALLENTELDAKTIVEKSLKIAGDICVFTNGNHTIEVLDYSAK.

The active site involves T2. Na(+)-binding residues include G157, C160, and T163.

Belongs to the peptidase T1B family. HslV subfamily. In terms of assembly, a double ring-shaped homohexamer of HslV is capped on each side by a ring-shaped HslU homohexamer. The assembly of the HslU/HslV complex is dependent on binding of ATP.

It is found in the cytoplasm. The catalysed reaction is ATP-dependent cleavage of peptide bonds with broad specificity.. Allosterically activated by HslU binding. Protease subunit of a proteasome-like degradation complex believed to be a general protein degrading machinery. This is ATP-dependent protease subunit HslV from Aeromonas salmonicida (strain A449).